The chain runs to 1195 residues: Protein PIP82 (1195 aa).

The segment covering 1-10 (MSHQEQQFQH) has biased composition (low complexity). Disordered regions lie at residues 1–55 (MSHQ…IGSS), 85–132 (KLRG…SQQF), 291–471 (NTFD…TANL), 493–515 (KVAKEPEELETKAEGSATGGASG), 544–567 (QRNANNQNATTSKQPKPNTVGHEP), 613–637 (EEDNEEDHSQDQTKRGQSSVSGIAT), 702–771 (MSPV…IVPK), 833–977 (SAGS…VKTS), and 1060–1195 (QITV…VVEI). Residues 11 to 26 (YPHHQHHHHHHHHHIH) show a composition bias toward basic residues. Residues 37–50 (RSSDLEPNRSRNTD) are compositionally biased toward basic and acidic residues. Residues 109-118 (GSAKDGAGAA) are compositionally biased toward low complexity. Residues 119–132 (QQTHLQVAGQSQQF) are compositionally biased toward polar residues. Residues 300–313 (HEQFERGKISHETD) show a composition bias toward basic and acidic residues. The span at 351-360 (QQAAAEESPQ) shows a compositional bias: low complexity. Positions 361 to 371 (ANPPPPPPPRP) are enriched in pro residues. Positions 400–450 (ETTKTAENADENNASRKLSIRQNIKRLRKSIKRPSKIKSKAAAPVPDSDEE) are phospho-regulated basic and hydrophobic (PRBH) motif. Basic residues predominate over residues 422-438 (NIKRLRKSIKRPSKIKS). The segment covering 494 to 505 (VAKEPEELETKA) has biased composition (basic and acidic residues). Positions 545-560 (RNANNQNATTSKQPKP) are enriched in polar residues. Polar residues-rich tracts occupy residues 732-742 (SGPQKSMSYSP) and 856-867 (RVQSPQIGNSRE). Acidic residues predominate over residues 872–891 (QEEEDKEAERDSEEEEEERD). 2 stretches are compositionally biased toward pro residues: residues 898–910 (SESPPPPPLPQRR) and 925–939 (VPPPLPVSKPPPPPS). Over residues 940 to 968 (VETIPSVASLPSPAPVTRSMAQRSASMSR) the composition is skewed to low complexity. Residues 1075–1085 (QSDQSDQSAHQ) show a composition bias toward polar residues. Residues 1086–1095 (EITDTRKTKS) are compositionally biased toward basic and acidic residues. Polar residues predominate over residues 1102-1111 (RQNSNCSRSE). 2 stretches are compositionally biased toward low complexity: residues 1114 to 1149 (SPLSFPSSRRSSTPTNLNANSNSNPNPSTNPNQNPS) and 1179 to 1195 (SYYSISPSGSSRYVVEI).

Post-translationally, phosphorylated by aPKC which lowers lipid affinity and promotes dissociation from the cell cortex. In the photoreceptor cells, aPKC-mediated phosphorylation leads to its displacement from the stalk apical cortex and thus restricts its localization to the rhabdomeric apical cortex where it functions. Dephosphorylation appears to be light-dependent. As to expression, restricted to photoreceptor cells (at protein level). Not detected until approximately 48hrs after puparium formation (APF) and then maintained in the photoreceptor cells post-eclosion (at protein level).

It is found in the cytoplasm. The protein localises to the cell cortex. The protein resides in the cytosol. Its subcellular location is the cell projection. It localises to the rhabdomere. Its function is as follows. Required for the morphological differentiation and maintenance of the rhabdomeric photoreceptor apical domain. Acts as a downstream component of the gl and Pph13 transcriptional pathway which is required for photoreceptor cell development. Likely to function by regulating the trafficking or retention of rhabdomeric proteins including the phototransduction proteins ninaE and didum. In Drosophila melanogaster (Fruit fly), this protein is Protein PIP82.